Here is a 195-residue protein sequence, read N- to C-terminus: 3-isopropylmalate dehydratase small subunit (195 aa).

This sequence belongs to the LeuD family. LeuD type 1 subfamily. As to quaternary structure, heterodimer of LeuC and LeuD.

It catalyses the reaction (2R,3S)-3-isopropylmalate = (2S)-2-isopropylmalate. The protein operates within amino-acid biosynthesis; L-leucine biosynthesis; L-leucine from 3-methyl-2-oxobutanoate: step 2/4. Its function is as follows. Catalyzes the isomerization between 2-isopropylmalate and 3-isopropylmalate, via the formation of 2-isopropylmaleate. The polypeptide is 3-isopropylmalate dehydratase small subunit (Parafrankia sp. (strain EAN1pec)).